Reading from the N-terminus, the 160-residue chain is 6,7-dimethyl-8-ribityllumazine synthase (160 aa).

5-amino-6-(D-ribitylamino)uracil is bound by residues Trp-27, 59–61 (AIE), and 81–83 (VVI). 86-87 (ET) serves as a coordination point for (2S)-2-hydroxy-3-oxobutyl phosphate. His-89 (proton donor) is an active-site residue. Asn-114 provides a ligand contact to 5-amino-6-(D-ribitylamino)uracil. Arg-128 contacts (2S)-2-hydroxy-3-oxobutyl phosphate.

It belongs to the DMRL synthase family. In terms of assembly, homopentamer.

It catalyses the reaction (2S)-2-hydroxy-3-oxobutyl phosphate + 5-amino-6-(D-ribitylamino)uracil = 6,7-dimethyl-8-(1-D-ribityl)lumazine + phosphate + 2 H2O + H(+). It participates in cofactor biosynthesis; riboflavin biosynthesis; riboflavin from 2-hydroxy-3-oxobutyl phosphate and 5-amino-6-(D-ribitylamino)uracil: step 1/2. Functionally, catalyzes the formation of 6,7-dimethyl-8-ribityllumazine by condensation of 5-amino-6-(D-ribitylamino)uracil with 3,4-dihydroxy-2-butanone 4-phosphate. This is the penultimate step in the biosynthesis of riboflavin. The protein is 6,7-dimethyl-8-ribityllumazine synthase of Mycobacterium ulcerans (strain Agy99).